The following is a 435-amino-acid chain: Tol-Pal system protein TolB (435 aa).

The first 26 residues, methionine 1–alanine 26, serve as a signal peptide directing secretion.

It belongs to the TolB family. In terms of assembly, the Tol-Pal system is composed of five core proteins: the inner membrane proteins TolA, TolQ and TolR, the periplasmic protein TolB and the outer membrane protein Pal. They form a network linking the inner and outer membranes and the peptidoglycan layer.

The protein localises to the periplasm. Part of the Tol-Pal system, which plays a role in outer membrane invagination during cell division and is important for maintaining outer membrane integrity. The polypeptide is Tol-Pal system protein TolB (Allorhizobium ampelinum (strain ATCC BAA-846 / DSM 112012 / S4) (Agrobacterium vitis (strain S4))).